A 172-amino-acid polypeptide reads, in one-letter code: MFIKKIKAKANNNEINVIIEIPMNSGPIKYEFDKESGALFVDRFMQTTMSYPCNYGFIPDTLSNDGDPVDVLVVAHHPVVPGSVIKCRAIGVLMMEDESGLDEKIIAVPTSKLDITFDHIKELDDLCEMLKKRIVHFFEHYKDLEKGKWVKVTGWGDKVKAETLIKEGIDRN.

Substrate-binding residues include Lys-29, Arg-43, and Tyr-55. Positions 65, 70, and 102 each coordinate Mg(2+). Substrate is bound at residue Tyr-141.

This sequence belongs to the PPase family. Homohexamer. Mg(2+) is required as a cofactor.

The protein localises to the cytoplasm. The enzyme catalyses diphosphate + H2O = 2 phosphate + H(+). Its function is as follows. Catalyzes the hydrolysis of inorganic pyrophosphate (PPi) forming two phosphate ions. The chain is Inorganic pyrophosphatase from Rickettsia prowazekii (strain Madrid E).